Reading from the N-terminus, the 147-residue chain is C-glycoside deglycosidase beta subunit (147 aa).

This sequence belongs to the C-glycoside deglycosidase beta subunit family. In terms of assembly, heterooctamer composed of four alpha subunits (DfgA) and four beta subunits (DfgB). The cofactor is Mn(2+).

The catalysed reaction is 3''-dehydroisoorientin = 1,5-anhydro-D-erythro-hex-1-en-3-ulose + luteolin. It catalyses the reaction 3''-dehydroisovitexin = 1,5-anhydro-D-erythro-hex-1-en-3-ulose + apigenin. Activity is strongly reduced in the presence of chelating agents. Its function is as follows. Carbon-carbon bond-cleaving enzyme which participates in the metabolism of C-glycosides. Acts on the C6-glycosylated compounds 3''-dehydroisoorientin (3''-oxo-homoorientin) and 3''-dehydroisovitexin (3''-oxo-isovitexin). This chain is C-glycoside deglycosidase beta subunit, found in Eubacterium cellulosolvens (strain ATCC 43171 / JCM 9499 / 6) (Cillobacterium cellulosolvens).